The following is a 670-amino-acid chain: ATP-dependent RNA helicase DDX18 (670 aa).

2 stretches are compositionally biased toward polar residues: residues 31–42 and 83–105; these read SNLTLSETQNGD and VTKSPQKSTVLTNGEAAMQSSNS. Residues 31-169 form a disordered region; sequence SNLTLSETQN…ESEVPSLPLG (139 aa). The segment covering 117-154 has biased composition (basic and acidic residues); it reads MVNDAEPDTKKAKTENKGKSEEESAETTKETENNVEKP. A Q motif motif is present at residues 179–207; it reads FASLCNLVNENTLKAIKEMGFTNMTEIQH. The Helicase ATP-binding domain occupies 210-385; that stretch reads IRPLLEGRDL…RISLKKEPLY (176 aa). An ATP-binding site is contributed by 223–230; sequence AKTGSGKT. Residues 333-336 carry the DEAD box motif; sequence DEAD. The Helicase C-terminal domain occupies 399 to 569; it reads GLEQGYVVCP…DIQSQLEKLI (171 aa).

The protein belongs to the DEAD box helicase family. DDX18/HAS1 subfamily. Interacts with NOL8; the interaction is RNA-dependent. Interacts with PRC2 complex components EZH2, SUZ2 and JARID2; these interactions prevent deposition of the repressive H3K27me3 mark onto rDNA in pluripotent cells.

It localises to the nucleus. It is found in the nucleolus. Its subcellular location is the chromosome. It carries out the reaction ATP + H2O = ADP + phosphate + H(+). In terms of biological role, ATP-dependent RNA helicase that plays a role in the regulation of R-loop homeostasis in both endogenous R-loop-prone regions and at sites of DNA damage. At endogenous loci such as actively transcribed genes, may act as a helicase to resolve the formation of R-loop during transcription and prevent the interference of R-loop with DNA-replication machinery. Also participates in the removal of DNA-lesion-associated R-loop. Plays an essential role for establishing pluripotency during embryogenesis and for pluripotency maintenance in embryonic stem cells. Mechanistically, prevents the polycomb repressive complex 2 (PRC2) from accessing rDNA loci and protects the active chromatin status in nucleolus. This is ATP-dependent RNA helicase DDX18 (DDX18) from Homo sapiens (Human).